The primary structure comprises 156 residues: Small ribosomal subunit protein uS7 (156 aa).

The protein belongs to the universal ribosomal protein uS7 family. As to quaternary structure, part of the 30S ribosomal subunit. Contacts proteins S9 and S11.

Functionally, one of the primary rRNA binding proteins, it binds directly to 16S rRNA where it nucleates assembly of the head domain of the 30S subunit. Is located at the subunit interface close to the decoding center, probably blocks exit of the E-site tRNA. This Bacillus cereus (strain ZK / E33L) protein is Small ribosomal subunit protein uS7.